A 369-amino-acid chain; its full sequence is 4-hydroxy-3-methylbut-2-en-1-yl diphosphate synthase (flavodoxin) (369 aa).

Residues Cys-270, Cys-273, Cys-305, and Glu-312 each coordinate [4Fe-4S] cluster.

The protein belongs to the IspG family. Requires [4Fe-4S] cluster as cofactor.

The catalysed reaction is (2E)-4-hydroxy-3-methylbut-2-enyl diphosphate + oxidized [flavodoxin] + H2O + 2 H(+) = 2-C-methyl-D-erythritol 2,4-cyclic diphosphate + reduced [flavodoxin]. It participates in isoprenoid biosynthesis; isopentenyl diphosphate biosynthesis via DXP pathway; isopentenyl diphosphate from 1-deoxy-D-xylulose 5-phosphate: step 5/6. Its function is as follows. Converts 2C-methyl-D-erythritol 2,4-cyclodiphosphate (ME-2,4cPP) into 1-hydroxy-2-methyl-2-(E)-butenyl 4-diphosphate. In Haemophilus ducreyi (strain 35000HP / ATCC 700724), this protein is 4-hydroxy-3-methylbut-2-en-1-yl diphosphate synthase (flavodoxin).